We begin with the raw amino-acid sequence, 309 residues long: Methionyl-tRNA formyltransferase (309 aa).

Residue 109–112 coordinates (6S)-5,6,7,8-tetrahydrofolate; the sequence is SLLP.

This sequence belongs to the Fmt family.

The catalysed reaction is L-methionyl-tRNA(fMet) + (6R)-10-formyltetrahydrofolate = N-formyl-L-methionyl-tRNA(fMet) + (6S)-5,6,7,8-tetrahydrofolate + H(+). Its function is as follows. Attaches a formyl group to the free amino group of methionyl-tRNA(fMet). The formyl group appears to play a dual role in the initiator identity of N-formylmethionyl-tRNA by promoting its recognition by IF2 and preventing the misappropriation of this tRNA by the elongation apparatus. This is Methionyl-tRNA formyltransferase from Thiobacillus denitrificans (strain ATCC 25259 / T1).